The following is a 40-amino-acid chain: Metallothionein-1 (40 aa).

This sequence belongs to the metallothionein superfamily. Type 5 family.

Functionally, this protein binds cations of several transition elements. It is thought to be involved in detoxification processes. This chain is Metallothionein-1 (MtnA), found in Drosophila ananassae (Fruit fly).